Here is a 263-residue protein sequence, read N- to C-terminus: Benzil reductase ((S)-benzoin forming) IRC24 (263 aa).

The NADP(+) site is built by Ile-7 and Asn-86. Ser-143 functions as the Proton donor in the catalytic mechanism. Positions 157, 161, 190, and 192 each coordinate NADP(+). Tyr-157 acts as the Proton acceptor in catalysis. Lys-161 serves as the catalytic Lowers pKa of active site Tyr.

This sequence belongs to the short-chain dehydrogenases/reductases (SDR) family.

The enzyme catalyses (S)-benzoin + NADP(+) = benzil + NADPH + H(+). It carries out the reaction 2-hydroxy-1-phenyl-1-propanone + NADP(+) = 1-phenyl-1,2-propanedione + NADPH + H(+). Reduces benzil stereospecifically to (S)-benzoin. Also reduces 1-phenyl-1,2-propanedione to 2-hydroxy-1-phenyl-1-propanone. Is probably involved in a pathway contributing to genomic integrity. This chain is Benzil reductase ((S)-benzoin forming) IRC24 (IRC24), found in Saccharomyces cerevisiae (strain ATCC 204508 / S288c) (Baker's yeast).